The primary structure comprises 317 residues: Pseudouridine-5'-phosphate glycosidase (317 aa).

The active-site Proton donor is Glu27. Positions 89 and 109 each coordinate substrate. Asp141 is a binding site for Mn(2+). Position 143 to 145 (143 to 145 (SAD)) interacts with substrate. The active-site Nucleophile is Lys162.

It belongs to the pseudouridine-5'-phosphate glycosidase family. In terms of assembly, homotrimer. It depends on Mn(2+) as a cofactor.

The enzyme catalyses D-ribose 5-phosphate + uracil = psi-UMP + H2O. Functionally, catalyzes the reversible cleavage of pseudouridine 5'-phosphate (PsiMP) to ribose 5-phosphate and uracil. Functions biologically in the cleavage direction, as part of a pseudouridine degradation pathway. The sequence is that of Pseudouridine-5'-phosphate glycosidase from Sorangium cellulosum (strain So ce56) (Polyangium cellulosum (strain So ce56)).